The primary structure comprises 39 residues: Cytochrome b559 subunit beta (39 aa).

A helical membrane pass occupies residues 14-30 (WLAVHGLAVPTVFFLGS). Histidine 18 lines the heme pocket.

Belongs to the PsbE/PsbF family. In terms of assembly, heterodimer of an alpha subunit and a beta subunit. PSII is composed of 1 copy each of membrane proteins PsbA, PsbB, PsbC, PsbD, PsbE, PsbF, PsbH, PsbI, PsbJ, PsbK, PsbL, PsbM, PsbT, PsbX, PsbY, PsbZ, Psb30/Ycf12, at least 3 peripheral proteins of the oxygen-evolving complex and a large number of cofactors. It forms dimeric complexes. The cofactor is heme b.

Its subcellular location is the plastid. The protein resides in the chloroplast thylakoid membrane. Its function is as follows. This b-type cytochrome is tightly associated with the reaction center of photosystem II (PSII). PSII is a light-driven water:plastoquinone oxidoreductase that uses light energy to abstract electrons from H(2)O, generating O(2) and a proton gradient subsequently used for ATP formation. It consists of a core antenna complex that captures photons, and an electron transfer chain that converts photonic excitation into a charge separation. This chain is Cytochrome b559 subunit beta, found in Adiantum capillus-veneris (Maidenhair fern).